The primary structure comprises 326 residues: Malate dehydrogenase (326 aa).

An NAD(+)-binding site is contributed by 12–18 (GGTGQIA). Substrate contacts are provided by Arg93 and Arg99. NAD(+) is bound by residues Asn106, Gln113, and 130–132 (VGN). Residues Asn132 and Arg163 each coordinate substrate. Residue His188 is the Proton acceptor of the active site.

Belongs to the LDH/MDH superfamily. MDH type 2 family.

It catalyses the reaction (S)-malate + NAD(+) = oxaloacetate + NADH + H(+). In terms of biological role, catalyzes the reversible oxidation of malate to oxaloacetate. In Chlamydia trachomatis serovar D (strain ATCC VR-885 / DSM 19411 / UW-3/Cx), this protein is Malate dehydrogenase.